The sequence spans 690 residues: Ligand of Numb protein X 2 (690 aa).

An RING-type zinc finger spans residues 50–88 (CHICLQPLLQPLDTPCGHTFCYKCLRNFLQEKDFCPLDR). Residues 198-224 (STWSEEPGLDNPAFEESAGADTTQQPL) are disordered. The NPXY motif motif lies at 208–211 (NPAF). 4 PDZ domains span residues 233–318 (TIEI…LRER), 339–422 (QVAL…ARPG), 468–554 (HITV…KALE), and 600–688 (DIVL…WPGS). The disordered stretch occupies residues 418–455 (IARPGKPQPGNTIREAGNHSSSSQHHTPPPYYSRPSSH).

Interacts with the phosphotyrosine interaction domain of NUMB.

This is Ligand of Numb protein X 2 (LNX2) from Homo sapiens (Human).